A 616-amino-acid polypeptide reads, in one-letter code: Chaperone protein HscA (616 aa).

This sequence belongs to the heat shock protein 70 family.

Chaperone involved in the maturation of iron-sulfur cluster-containing proteins. Has a low intrinsic ATPase activity which is markedly stimulated by HscB. Involved in the maturation of IscU. In Salmonella paratyphi A (strain ATCC 9150 / SARB42), this protein is Chaperone protein HscA.